We begin with the raw amino-acid sequence, 430 residues long: C4-dicarboxylate transport protein (430 aa).

A run of 9 helical transmembrane segments spans residues Ser-8–Pro-28, Leu-44–Met-64, Ala-76–Val-96, Ala-144–Leu-164, Val-184–Met-204, Leu-222–Ala-242, Val-289–Leu-309, Ile-326–Val-346, and Ile-352–Ile-372.

The protein belongs to the dicarboxylate/amino acid:cation symporter (DAACS) (TC 2.A.23) family.

The protein localises to the cell inner membrane. Responsible for the transport of dicarboxylates such as succinate, fumarate, and malate from the periplasm across the membrane. In Pectobacterium atrosepticum (strain SCRI 1043 / ATCC BAA-672) (Erwinia carotovora subsp. atroseptica), this protein is C4-dicarboxylate transport protein.